We begin with the raw amino-acid sequence, 205 residues long: IQ domain-containing protein F1 (205 aa).

Composition is skewed to basic and acidic residues over residues 1 to 24 and 51 to 68; these read MEEKQPQKTKEPSKEDEPQQKEMP and ANEKSEKPPENQKKLSDK. The interval 1 to 68 is disordered; it reads MEEKQPQKTK…PENQKKLSDK (68 aa). 2 IQ domains span residues 68–97 and 124–153; these read KDTVATKIQAWWRGTLVRRALLHAALSACI and KEWAAVTLQSQARMWRIRRRYCQVLNAVRI.

In terms of assembly, interacts with calmodulin.

It is found in the cytoplasmic vesicle. Its subcellular location is the secretory vesicle. It localises to the acrosome. Its function is as follows. Involved in sperm capacitation and acrosome reaction. This is IQ domain-containing protein F1 from Homo sapiens (Human).